A 118-amino-acid polypeptide reads, in one-letter code: Large ribosomal subunit protein bL20 (118 aa).

It belongs to the bacterial ribosomal protein bL20 family.

In terms of biological role, binds directly to 23S ribosomal RNA and is necessary for the in vitro assembly process of the 50S ribosomal subunit. It is not involved in the protein synthesizing functions of that subunit. This is Large ribosomal subunit protein bL20 from Parvibaculum lavamentivorans (strain DS-1 / DSM 13023 / NCIMB 13966).